The chain runs to 113 residues: Protein translation factor SUI1 homolog (113 aa).

Belongs to the SUI1 family.

Its function is as follows. Probably involved in translation. This chain is Protein translation factor SUI1 homolog, found in Salix bakko (Japanese willow).